A 372-amino-acid chain; its full sequence is Gustatory and pheromone receptor 39a, isoform B (372 aa).

Residues 1 to 32 (MGTRNRKLLFFLHYQRYLGLTNLDFSKSLHIY) are Cytoplasmic-facing. The chain crosses the membrane as a helical span at residues 33–53 (WLHGTWSSTAIQIVVVGVFMA). Residues 54–59 (ALLGAL) are Extracellular-facing. A helical membrane pass occupies residues 60 to 80 (AESLYYMETKSQTGNTFDNAV). The Cytoplasmic portion of the chain corresponds to 81-122 (ILTTSVTQLLANLWLRSQQKSQVNLLQRLSQVVELLQFEPYA). A helical transmembrane segment spans residues 123-143 (VPQFRWLYRIWLLVCLIYGAM). Residues 144–147 (VTHF) lie on the Extracellular side of the membrane. The helical transmembrane segment at 148–168 (GINWLTTMQISRVLTLIGFVY) threads the bilayer. Topologically, residues 169 to 224 (RCVLANFQFTCYTGMVVILKKLLQVQVKQLEHLVSTTTISMAGVAGCLRTHDEILL) are cytoplasmic. Residues 225 to 245 (LGQRELIAVYGGVILFLFIYQ) traverse the membrane as a helical segment. The Extracellular segment spans residues 246-265 (VMQCILIFYISNLEGFHSSN). A helical membrane pass occupies residues 266–286 (DLVLIFCWLAPMLFYLILPLV). The Cytoplasmic portion of the chain corresponds to 287 to 348 (VNDIHNQANK…KSTLFKLFTA (62 aa)). Residues 349-368 (IFTYMVILVQFKEMENSTKS) form a helical membrane-spanning segment. Residue Ile369 is a topological domain, extracellular.

The protein belongs to the insect chemoreceptor superfamily. Gustatory receptor (GR) family. Gr21a subfamily. Expressed in the adult labellar chemosensory neurons. In larvae, is expressed in neurons of the terminal external chemosensory organ, as well as in the dorsal and posterior pharyngeal sense organs.

The protein localises to the cell membrane. In terms of biological role, gustatory receptor which mediates acceptance or avoidance behavior, depending on its substrates. Plays a role in sustaining courtship behavior in males, possibly through the reception of a stimulating arrestant pheromone. The sequence is that of Gustatory and pheromone receptor 39a, isoform B (Gr39a) from Drosophila melanogaster (Fruit fly).